Here is a 355-residue protein sequence, read N- to C-terminus: DnaJ homolog dnj-20 (355 aa).

The first 21 residues, 1–21 (MRILNVSLLVLASSLVAFVEC), serve as a signal peptide directing secretion. Residues 24 to 89 (DFYKILGVAK…EKRAMYDRHG (66 aa)) enclose the J domain.

The protein is DnaJ homolog dnj-20 of Caenorhabditis elegans.